The following is a 250-amino-acid chain: 26S proteasome non-ATPase regulatory subunit 8 (250 aa).

The region spanning 63 to 233 (HDFETFDDYI…QEKPVNLDTV (171 aa)) is the PCI domain.

Belongs to the proteasome subunit S14 family.

In terms of biological role, acts as a regulatory subunit of the 26S proteasome which is involved in the ATP-dependent degradation of ubiquitinated proteins. This is 26S proteasome non-ATPase regulatory subunit 8 from Caenorhabditis elegans.